Here is a 498-residue protein sequence, read N- to C-terminus: Interferon regulatory factor 5 (498 aa).

Thr-10 bears the Phosphothreonine mark. Residues 12-18 carry the Nuclear localization signal motif; it reads PRRVRLK. Residues 14–122 constitute a DNA-binding region (IRF tryptophan pentad repeat); sequence RVRLKPWLVA…QPYKIYEVCS (109 aa). The segment at 121–207 is disordered; it reads CSNGPAPTDS…SPLAPPPGNP (87 aa). A Nuclear export signal motif is present at residues 150-160; that stretch reads LQRMLPSLSLT. Position 158 is a phosphoserine; by TBK1 (Ser-158). The span at 168-206 shows a compositional bias: pro residues; that stretch reads TLQPPTLRPPTLQPPTLQPPVVLGPPAPDPSPLAPPPGN. Residue Ser-293 is modified to Phosphoserine; by TBK1. Ser-301 carries the phosphoserine modification. Glycyl lysine isopeptide (Lys-Gly) (interchain with G-Cter in ubiquitin) cross-links involve residues Lys-411 and Lys-412. 4 positions are modified to phosphoserine: Ser-431, Ser-435, Ser-437, and Ser-440. Phosphoserine; by IKKB is present on Ser-446. Positions 478–498 are disordered; sequence PPGAGLGVGQGPWPMHPAGMQ.

The protein belongs to the IRF family. Homodimer, when phosphorylated. Interacts with TASL (via pLxIS motif); interaction takes place downstream of TLR7, TLR8 or TLR9, leading to its activation. Interacts with MYD88 and TRAF6. In terms of processing, phosphorylation of serine and threonine residues by IKBKB in a C-terminal autoinhibitory region, stimulates dimerization, transport into the nucleus, assembly with the coactivator CBP/EP300 and initiation of transcription. 'Lys-63'-linked polyubiquitination by TRAF6 is required for activation.

Its subcellular location is the cytoplasm. The protein localises to the nucleus. Its activity is regulated as follows. Maintained as a monomer in an autoinhibited state. Phosphorylation and activation follow the following steps: innate adapter protein TASL recruits IRF5, thereby licensing IRF5 for phosphorylation by IKBKB. Phosphorylated IRF5 dissociates from the adapter proteins, dimerizes, and then enters the nucleus to induce IFNs. With respect to regulation, (Microbial infection) Activated upon coronavirus SARS-CoV-2 infection. Its function is as follows. Transcription factor that plays a critical role in innate immunity by activating expression of type I interferon (IFN) IFNA and INFB and inflammatory cytokines downstream of endolysosomal toll-like receptors TLR7, TLR8 and TLR9. Regulates the transcription of type I IFN genes (IFN-alpha and IFN-beta) and IFN-stimulated genes (ISG) by binding to an interferon-stimulated response element (ISRE) in their promoters. Can efficiently activate both the IFN-beta (IFNB) and the IFN-alpha (IFNA) genes and mediate their induction downstream of the TLR-activated, MyD88-dependent pathway. Key transcription factor regulating the IFN response during SARS-CoV-2 infection. The polypeptide is Interferon regulatory factor 5 (Homo sapiens (Human)).